Consider the following 505-residue polypeptide: Membrane-bound O-acyltransferase GUP1 (505 aa).

Residues 1 to 217 (MFKAAMDASN…VAPIPLTDYN (217 aa)) are Extracellular-facing. A helical transmembrane segment spans residues 218 to 238 (FVNYMAYITYAPLFIAGPIIT). Residues 239–266 (FNDYIYQSDYKAMSSVKDYKRTFIYFLR) are Cytoplasmic-facing. Residues 267-287 (FAFCILVMEFLLHFMYVVAVS) form a helical membrane-spanning segment. At 288-296 (KTKAWEGDT) the chain is on the extracellular side. A helical membrane pass occupies residues 297-317 (PFQLSMLGLFNLNIIWLKLLI). Residues 318-377 (PWRLFRLWSLIDGIDPPENMIRCMDNNFSTLAFWRAWHRSYNRWIIRYIYIPLGGGGKYR) are Cytoplasmic-facing. The next 2 helical transmembrane spans lie at 378 to 398 (ILNSLCVFSFVAIWHDIELKL) and 399 to 419 (LMWGWLVVIFIIPELAATAIF). H392 is an active-site residue. The Cytoplasmic segment spans residues 420–430 (KNYQHEPWYRH). A helical transmembrane segment spans residues 431 to 451 (VCALGAVINIWMMMLANLFGF). Residues 452–464 (CMGKDGTMSLIKT) are Extracellular-facing. Residues 465 to 485 (LFTTAVGLRFLFLSLGALFVG) traverse the membrane as a helical segment. At 486 to 505 (SQVMFELREAEKRRGVNVKC) the chain is on the cytoplasmic side.

This sequence belongs to the membrane-bound acyltransferase family.

It localises to the cell membrane. It is found in the endoplasmic reticulum membrane. The protein resides in the mitochondrion membrane. In terms of biological role, membrane-bound O-acyltransferase involved in the remodeling of glycosylphosphatidylinositol (GPI) anchors. Acts only on GPI-anchored proteins, but not on free GPI lipids. Also involved in lipid metabolism, having profound effects on sphingolipid-sterol-ordered domains integrity and assembly. Involved in cell integrity and apoptosis. This is Membrane-bound O-acyltransferase GUP1 (GUP1) from Millerozyma farinosa (Yeast).